We begin with the raw amino-acid sequence, 230 residues long: Cytidylate kinase (230 aa).

Residue 10–18 (GPAGSGKST) participates in ATP binding.

Belongs to the cytidylate kinase family. Type 1 subfamily.

Its subcellular location is the cytoplasm. The enzyme catalyses CMP + ATP = CDP + ADP. It catalyses the reaction dCMP + ATP = dCDP + ADP. The sequence is that of Cytidylate kinase from Leptospira borgpetersenii serovar Hardjo-bovis (strain L550).